Reading from the N-terminus, the 85-residue chain is Colicin E3 immunity protein (85 aa).

Belongs to the cloacin immunity protein family. Native colicin E3 is a 1:1 complex of A chain and protein B (Im3). Binds between the translocation and cytotoxic RNase domains of intact ColE3, blocking access to the 16S rRNA substrate. Forms a very tight 1:1 complex with the cytotoxic fragment (residues 456-551) of ColE3 (ceaC).

Its function is as follows. The cognate immunity protein for colicin E3 (ColE3), protects cells which harbor the plasmid ColE3 against the toxic action of ColE3. This protein inhibits the 16S RNA hydrolyzing activity of ColE3 by binding with very high affinity to the C-terminal catalytic domain of ColE3. The chain is Colicin E3 immunity protein from Escherichia coli.